The following is a 209-amino-acid chain: Ribosomal RNA large subunit methyltransferase E (209 aa).

S-adenosyl-L-methionine-binding residues include Gly63, Trp65, Asp83, Asp99, and Asp124. Lys164 serves as the catalytic Proton acceptor.

It belongs to the class I-like SAM-binding methyltransferase superfamily. RNA methyltransferase RlmE family.

It localises to the cytoplasm. It catalyses the reaction uridine(2552) in 23S rRNA + S-adenosyl-L-methionine = 2'-O-methyluridine(2552) in 23S rRNA + S-adenosyl-L-homocysteine + H(+). Functionally, specifically methylates the uridine in position 2552 of 23S rRNA at the 2'-O position of the ribose in the fully assembled 50S ribosomal subunit. This Alkalilimnicola ehrlichii (strain ATCC BAA-1101 / DSM 17681 / MLHE-1) protein is Ribosomal RNA large subunit methyltransferase E.